Consider the following 123-residue polypeptide: S-adenosylmethionine decarboxylase proenzyme 2 (123 aa).

The active-site Schiff-base intermediate with substrate; via pyruvic acid is serine 65. Serine 65 is modified (pyruvic acid (Ser); by autocatalysis). Histidine 70 (proton acceptor; for processing activity) is an active-site residue. Cysteine 85 functions as the Proton donor; for catalytic activity in the catalytic mechanism.

The protein belongs to the prokaryotic AdoMetDC family. Type 1 subfamily. Heterotetramer of two alpha and two beta chains arranged as a dimer of alpha/beta heterodimers. Requires pyruvate as cofactor. In terms of processing, is synthesized initially as an inactive proenzyme. Formation of the active enzyme involves a self-maturation process in which the active site pyruvoyl group is generated from an internal serine residue via an autocatalytic post-translational modification. Two non-identical subunits are generated from the proenzyme in this reaction, and the pyruvate is formed at the N-terminus of the alpha chain, which is derived from the carboxyl end of the proenzyme. The post-translation cleavage follows an unusual pathway, termed non-hydrolytic serinolysis, in which the side chain hydroxyl group of the serine supplies its oxygen atom to form the C-terminus of the beta chain, while the remainder of the serine residue undergoes an oxidative deamination to produce ammonia and the pyruvoyl group blocking the N-terminus of the alpha chain.

It carries out the reaction S-adenosyl-L-methionine + H(+) = S-adenosyl 3-(methylsulfanyl)propylamine + CO2. It participates in amine and polyamine biosynthesis; S-adenosylmethioninamine biosynthesis; S-adenosylmethioninamine from S-adenosyl-L-methionine: step 1/1. In terms of biological role, catalyzes the decarboxylation of S-adenosylmethionine to S-adenosylmethioninamine (dcAdoMet), the propylamine donor required for the synthesis of the polyamines spermine and spermidine from the diamine putrescine. The protein is S-adenosylmethionine decarboxylase proenzyme 2 of Bacillus anthracis.